Here is a 440-residue protein sequence, read N- to C-terminus: Cytochrome c biogenesis protein Ccs1 (440 aa).

3 helical membrane-spanning segments follow: residues 25–45 (LQFSIILLLLIAIFSTIGTVI), 84–104 (TWWFLSLLFIFSLSLFTCSIS), and 170–190 (LAPIFVHGSIILLLTGSVLGL).

Belongs to the Ccs1/CcsB family. May interact with CcsA.

The protein resides in the plastid. It is found in the chloroplast thylakoid membrane. In terms of biological role, required during biogenesis of c-type cytochromes (cytochrome c6 and cytochrome f) at the step of heme attachment. This chain is Cytochrome c biogenesis protein Ccs1, found in Pyropia yezoensis (Susabi-nori).